The sequence spans 186 residues: Putative manganese efflux pump MntP (186 aa).

The next 6 helical transmembrane spans lie at 1–21 (MSFLTNFLLGLGLAMDAFAVS), 39–59 (LAVFFGSFQAMMPVLGWIGGS), 61–81 (VSSFVSDYAPWIAFLLLAFIG), 102–122 (YSVLFLLAVATSIDALAVGMS), 134–156 (VIIIGCVTFVMSFCGAILGYRLG), and 165–185 (ILGGLILIGLGGKILAEHMLW).

The protein belongs to the MntP (TC 9.B.29) family.

Its subcellular location is the cell membrane. Probably functions as a manganese efflux pump. This chain is Putative manganese efflux pump MntP, found in Methanosarcina acetivorans (strain ATCC 35395 / DSM 2834 / JCM 12185 / C2A).